The sequence spans 785 residues: Cullin-3 (785 aa).

The 63-residue stretch at 715–777 folds into the Cullin neddylation domain; that stretch reads SRKHQADACI…REYLQRQADN (63 aa). Residue K729 forms a Glycyl lysine isopeptide (Lys-Gly) (interchain with G-Cter in NEDD8) linkage.

This sequence belongs to the cullin family. Probable component of multiple cullin-RING-based BC3B (BTB-CUL3-BTB) E3 ubiquitin-protein ligase complexes formed by cul-3, rbx-1 and a variable BTB domain-containing protein as adapter and substrate recognition component. Interacts with btb1, btb2, btb3, nedd8 and pip1. Post-translationally, neddylated; enhancing the ubiquitin-ligase activity.

The protein localises to the cytoplasm. It participates in protein modification; protein ubiquitination. In terms of biological role, probable core component of multiple cullin-RING-based BC3B (BTB-CUL3-BTB) E3 ubiquitin-protein ligase complexes which mediate the ubiquitination and subsequent proteasomal degradation of target proteins. As a scaffold protein may contribute to catalysis through positioning of the substrate and the ubiquitin-conjugating enzyme. The functional specificity of the BC3B complex depends on the substrate recognition component. Involved in ubiquitin-mediated degradation of btb3. The chain is Cullin-3 (cul3) from Schizosaccharomyces pombe (strain 972 / ATCC 24843) (Fission yeast).